The chain runs to 476 residues: Beta-xylosidase (476 aa).

E188 serves as the catalytic Proton donor. E292 functions as the Nucleophile in the catalytic mechanism. N-linked (GlcNAc...) asparagine glycosylation occurs at N468.

This sequence belongs to the glycosyl hydrolase 5 (cellulase A) family.

It localises to the secreted. The enzyme catalyses Hydrolysis of (1-&gt;4)-beta-D-xylans, to remove successive D-xylose residues from the non-reducing termini.. Functionally, catalyzes the hydrolysis of xylo-oligomers to xylose units and plays an important role in xylan degradation. Can also perform the transglycosylation of xylose and alcohol. Has no endoglucanase activity. The sequence is that of Beta-xylosidase from Phanerodontia chrysosporium (White-rot fungus).